The primary structure comprises 465 residues: Cysteine--tRNA ligase (465 aa).

Cys27 lines the Zn(2+) pocket. The 'HIGH' region signature appears at 29 to 39; sequence PTVYNFFHIGN. The Zn(2+) site is built by Cys207, His232, and Glu236. A 'KMSKS' region motif is present at residues 264–268; that stretch reads KMSKS. Residue Lys267 coordinates ATP.

The protein belongs to the class-I aminoacyl-tRNA synthetase family. Monomer. Requires Zn(2+) as cofactor.

Its subcellular location is the cytoplasm. The catalysed reaction is tRNA(Cys) + L-cysteine + ATP = L-cysteinyl-tRNA(Cys) + AMP + diphosphate. In Clostridium botulinum (strain Langeland / NCTC 10281 / Type F), this protein is Cysteine--tRNA ligase.